We begin with the raw amino-acid sequence, 388 residues long: Succinate--CoA ligase [ADP-forming] subunit beta (388 aa).

Positions 9–244 (KQLFAEYGLP…PSQDDPREAH (236 aa)) constitute an ATP-grasp domain. ATP contacts are provided by residues Lys-46, 53–55 (GRG), Glu-99, Thr-102, and Glu-107. Positions 199 and 213 each coordinate Mg(2+). Substrate-binding positions include Asn-264 and 321–323 (GIV).

The protein belongs to the succinate/malate CoA ligase beta subunit family. In terms of assembly, heterotetramer of two alpha and two beta subunits. Mg(2+) is required as a cofactor.

It carries out the reaction succinate + ATP + CoA = succinyl-CoA + ADP + phosphate. It catalyses the reaction GTP + succinate + CoA = succinyl-CoA + GDP + phosphate. It functions in the pathway carbohydrate metabolism; tricarboxylic acid cycle; succinate from succinyl-CoA (ligase route): step 1/1. Its function is as follows. Succinyl-CoA synthetase functions in the citric acid cycle (TCA), coupling the hydrolysis of succinyl-CoA to the synthesis of either ATP or GTP and thus represents the only step of substrate-level phosphorylation in the TCA. The beta subunit provides nucleotide specificity of the enzyme and binds the substrate succinate, while the binding sites for coenzyme A and phosphate are found in the alpha subunit. The polypeptide is Succinate--CoA ligase [ADP-forming] subunit beta (Pseudomonas fluorescens (strain Pf0-1)).